We begin with the raw amino-acid sequence, 472 residues long: Coronin-6 (472 aa).

6 WD repeats span residues 23–64, 72–111, 122–161, 165–204, 210–251, and 256–296; these read QAYE…VLPL, KNYPLVTGHTAPVLDIDWCPHNDNVIASASDDTTIMVWQI, EPIITLEGHSKRVGILSWHPTARNVLLSAGGDNVIIIWNV, EVLLSLDDMHPDVIHSVCWNSNGSLLATTCKDKTLRIIDP, VAEQ…LWDP, and EPVA…YFEI. Residues 407-433 form a disordered region; that stretch reads KRNILDVRPPSGPRRSQSASDAPLSQQ. Polar residues predominate over residues 420 to 433; sequence RRSQSASDAPLSQQ. Residues 430-464 adopt a coiled-coil conformation; sequence LSQQHTLETLLEEIKALRERVQAQEQRITALENML.

This chain is Coronin-6 (CORO6), found in Homo sapiens (Human).